The chain runs to 200 residues: Adenylate kinase (200 aa).

10–15 provides a ligand contact to ATP; sequence GAGKGT. Residues 30–59 are NMP; the sequence is STGDMLRAAVAAGTPVGLEAKSIMESGGLV. Residues Thr31, Arg36, 57–59, 85–88, and Gln92 each bind AMP; these read GLV and GFPR. The interval 126–142 is LID; that stretch reads KRAEETAARGQPVRKDD. Arg127 contacts ATP. Residues Arg139 and Arg150 each coordinate AMP. An ATP-binding site is contributed by Lys178.

This sequence belongs to the adenylate kinase family. In terms of assembly, monomer.

It is found in the cytoplasm. The enzyme catalyses AMP + ATP = 2 ADP. Its pathway is purine metabolism; AMP biosynthesis via salvage pathway; AMP from ADP: step 1/1. Catalyzes the reversible transfer of the terminal phosphate group between ATP and AMP. Plays an important role in cellular energy homeostasis and in adenine nucleotide metabolism. This is Adenylate kinase from Methylorubrum populi (strain ATCC BAA-705 / NCIMB 13946 / BJ001) (Methylobacterium populi).